The chain runs to 200 residues: Probable nicotinate-nucleotide adenylyltransferase (200 aa).

The protein belongs to the NadD family.

The enzyme catalyses nicotinate beta-D-ribonucleotide + ATP + H(+) = deamido-NAD(+) + diphosphate. The protein operates within cofactor biosynthesis; NAD(+) biosynthesis; deamido-NAD(+) from nicotinate D-ribonucleotide: step 1/1. Functionally, catalyzes the reversible adenylation of nicotinate mononucleotide (NaMN) to nicotinic acid adenine dinucleotide (NaAD). This is Probable nicotinate-nucleotide adenylyltransferase from Clavibacter michiganensis subsp. michiganensis (strain NCPPB 382).